A 138-amino-acid polypeptide reads, in one-letter code: Large ribosomal subunit protein uL14 (138 aa).

Belongs to the universal ribosomal protein uL14 family. Part of the 50S ribosomal subunit. Forms a cluster with proteins L3 and L24e, part of which may contact the 16S rRNA in 2 intersubunit bridges.

Its function is as follows. Binds to 23S rRNA. Forms part of two intersubunit bridges in the 70S ribosome. The chain is Large ribosomal subunit protein uL14 from Metallosphaera sedula (strain ATCC 51363 / DSM 5348 / JCM 9185 / NBRC 15509 / TH2).